Consider the following 160-residue polypeptide: uncharacterized protein (160 aa).

An N-acetyltransferase domain is found at 9–151 (LLINYKTLEK…GENPLIWLPE (143 aa)).

This is an uncharacterized protein from Oceanobacillus iheyensis (strain DSM 14371 / CIP 107618 / JCM 11309 / KCTC 3954 / HTE831).